Reading from the N-terminus, the 93-residue chain is MKPLGDRIVIEVVETEEKTASGIVLPDTAKEKPQEGRVVAVGAGRVLDNGQRIAPEVEVGDRIIFSKYAGTEVKYDGKEYLILRESDILAVIR.

Belongs to the GroES chaperonin family. Heptamer of 7 subunits arranged in a ring. Interacts with the chaperonin GroEL.

The protein resides in the cytoplasm. Its function is as follows. Together with the chaperonin GroEL, plays an essential role in assisting protein folding. The GroEL-GroES system forms a nano-cage that allows encapsulation of the non-native substrate proteins and provides a physical environment optimized to promote and accelerate protein folding. GroES binds to the apical surface of the GroEL ring, thereby capping the opening of the GroEL channel. The sequence is that of Co-chaperonin GroES from Geobacillus kaustophilus (strain HTA426).